The primary structure comprises 686 residues: Methionine--tRNA ligase (686 aa).

The 'HIGH' region motif lies at 15–25 (PYANGPIHLGH). Residues C146, C149, C159, and C162 each coordinate Zn(2+). The 'KMSKS' region motif lies at 332–336 (KMSKS). K335 lines the ATP pocket. The tRNA-binding domain occupies 585–686 (TFAKTDLRVA…DGAKPGQRIM (102 aa)).

Belongs to the class-I aminoacyl-tRNA synthetase family. MetG type 1 subfamily. Homodimer. It depends on Zn(2+) as a cofactor.

Its subcellular location is the cytoplasm. It catalyses the reaction tRNA(Met) + L-methionine + ATP = L-methionyl-tRNA(Met) + AMP + diphosphate. Functionally, is required not only for elongation of protein synthesis but also for the initiation of all mRNA translation through initiator tRNA(fMet) aminoacylation. In Psychromonas ingrahamii (strain DSM 17664 / CCUG 51855 / 37), this protein is Methionine--tRNA ligase.